The following is a 75-amino-acid chain: Protein BsdD (75 aa).

Involved in the non-oxidative decarboxylation and detoxification of phenolic derivatives under both aerobic and anaerobic conditions, however the precise biochemical function of BsdD in metabolism of phenolic acid is unknown. This is Protein BsdD from Bacillus subtilis (strain 168).